We begin with the raw amino-acid sequence, 275 residues long: Rhamnulose-1-phosphate aldolase (275 aa).

Glutamate 117 is a catalytic residue. Residues histidine 141, histidine 143, and histidine 212 each contribute to the Zn(2+) site.

The protein belongs to the aldolase class II family. RhaD subfamily. In terms of assembly, homotetramer. It depends on Zn(2+) as a cofactor.

It localises to the cytoplasm. The catalysed reaction is L-rhamnulose 1-phosphate = (S)-lactaldehyde + dihydroxyacetone phosphate. Its pathway is carbohydrate degradation; L-rhamnose degradation; glycerone phosphate from L-rhamnose: step 3/3. In terms of biological role, catalyzes the reversible cleavage of L-rhamnulose-1-phosphate to dihydroxyacetone phosphate (DHAP) and L-lactaldehyde. The protein is Rhamnulose-1-phosphate aldolase of Salmonella dublin (strain CT_02021853).